The sequence spans 442 residues: DDB1- and CUL4-associated factor 12-B (442 aa).

Residues 1–13 (MTRRPVSRKRRAT) are compositionally biased toward basic residues. Positions 1-31 (MTRRPVSRKRRATHGTGPGEQSDWDHSAHKR) are disordered. 4 WD repeats span residues 132–173 (SHQS…PVCV), 177–215 (GHND…VNKR), 245–284 (PVNC…SKLL), and 333–370 (EQGS…FLED).

It belongs to the WD repeat DCAF12 family. In terms of assembly, component of the DCX(DCAF12) E3 ubiquitin ligase complex, at least composed of cul4 (cul4a or cul4b), ddb1, dcaf12 and rbx1.

The protein resides in the cytoplasm. Its subcellular location is the cytoskeleton. It localises to the microtubule organizing center. It is found in the centrosome. The protein localises to the nucleus. It functions in the pathway protein modification; protein ubiquitination. Substrate-recognition component of a DCX (DDB1-CUL4-X-box) E3 ubiquitin-protein ligase complex of the DesCEND (destruction via C-end degrons) pathway, which recognizes a C-degron located at the extreme C terminus of target proteins, leading to their ubiquitination and degradation. The C-degron recognized by the DesCEND pathway is usually a motif of less than ten residues and can be present in full-length proteins, truncated proteins or proteolytically cleaved forms. The DCX(DCAF12) complex specifically recognizes proteins with a diglutamate (Glu-Glu) at the C-terminus leading to their ubiquitination and degradation. Also directly recognizes the C-terminal glutamate-leucine (Glu-Leu) degron as an alternative degron in proteins leading to their ubiquitination and degradation. The polypeptide is DDB1- and CUL4-associated factor 12-B (dcaf12-b) (Xenopus laevis (African clawed frog)).